Reading from the N-terminus, the 41-residue chain is Large ribosomal subunit protein bL36 (41 aa).

This sequence belongs to the bacterial ribosomal protein bL36 family.

The chain is Large ribosomal subunit protein bL36 from Rhodopseudomonas palustris (strain BisA53).